Reading from the N-terminus, the 244-residue chain is MRGAFYVATAFLIASSTRTAAESVQIKSEITQDLDKLPVGDSDTKSLPRRSLKGSGDRLEIPVAEEERVIPTGVLEGAGKDVSEAILRLEKSGDDLNKMVKVGEGVGSSATSKGKRIQIFQKSHKDAVAEHQQVFDTYKHAIKKNEALELERDTALIKSHNWKLLSDYFSAQAAKDTKNYHNYHTIFSQLDSVVTPATASYKGIKNTREKYLALLEESFSRANAAKHAGNMDEYNEIQVTVAEL.

Residues 1–21 form the signal peptide; sequence MRGAFYVATAFLIASSTRTAA. The span at 37–46 shows a compositional bias: basic and acidic residues; it reads LPVGDSDTKS. The interval 37–56 is disordered; the sequence is LPVGDSDTKSLPRRSLKGSG. A RxLR-dEER motif is present at residues 50–68; the sequence is RSLKGSGDRLEIPVAEEER.

It belongs to the RxLR effector family.

It localises to the secreted. Its subcellular location is the host cytoplasm. It is found in the host nucleus. Its function is as follows. Secreted effector that suppresses pattern-triggered immunity (PTI) in plant host. The chain is Secreted RxLR effector protein RXLR-C05 from Plasmopara halstedii (Downy mildew of sunflower).